Reading from the N-terminus, the 442-residue chain is MALGGEERKRRKGSERRQSSGDGVSCAASDYLVGQVADSLRGGPRPPGGGTGRLAALFSTAEPSAPPVFVPVPQETSKKRKLDDDDDDEEESVSQTKKPVLQEPSRKVKVKKLSDADKRLANRESALASADLEEELHQDQGQGRRRRSQSRGKVADGEALDVALSLAKDGGQRTKIPVNPEEERLKNERTVFVGNLPVTCNKKKLKSFFKEYGQVESVRFRSVMPAEGTLTKKLAAIKRKFHPDQKSINAYVVFKDESAAAKALQRNGAQIAEGFRIRVDLASETASRDKRSVFVGNLPYKIEDSALEEHFLDCGSIVAVRIVRNPLTGVGRGFGYVLFENTDAVHLALKLNNSELMGRKLRVMRSVNKEKLKQQNSNPSLKKDVIKPKQRLNFTSKEGKFHSKEGKFHSKNAFIGEKAVLMKKKKKGQKKKVQMKKPRKQQ.

Disordered stretches follow at residues 1–26 and 60–157; these read MALGGEERKRRKGSERRQSSGDGVSC and TAEP…VADG. Positions 112–122 are enriched in basic and acidic residues; that stretch reads KLSDADKRLAN. Lys-153 carries the N6-acetyllysine modification. RRM domains follow at residues 189–284 and 291–368; these read RTVF…LASE and RSVF…RSVN. Lys-246 participates in a covalent cross-link: Glycyl lysine isopeptide (Lys-Gly) (interchain with G-Cter in SUMO2). Phosphoserine is present on Ser-292. Residues 418–442 are disordered; sequence KAVLMKKKKKGQKKKVQMKKPRKQQ. Positions 421–442 are enriched in basic residues; it reads LMKKKKKGQKKKVQMKKPRKQQ.

Belongs to the RRM RBM34 family.

Its subcellular location is the nucleus. It is found in the nucleolus. This Mus musculus (Mouse) protein is RNA-binding protein 34 (Rbm34).